We begin with the raw amino-acid sequence, 420 residues long: LanC-like protein 3 (420 aa).

It belongs to the LanC-like protein family.

In Homo sapiens (Human), this protein is LanC-like protein 3 (LANCL3).